Reading from the N-terminus, the 467-residue chain is ATP-dependent protease ATPase subunit HslU (467 aa).

ATP is bound by residues isoleucine 18, 60 to 65 (GVGKTE), aspartate 280, glutamate 345, and arginine 417.

This sequence belongs to the ClpX chaperone family. HslU subfamily. As to quaternary structure, a double ring-shaped homohexamer of HslV is capped on each side by a ring-shaped HslU homohexamer. The assembly of the HslU/HslV complex is dependent on binding of ATP.

Its subcellular location is the cytoplasm. Its function is as follows. ATPase subunit of a proteasome-like degradation complex; this subunit has chaperone activity. The binding of ATP and its subsequent hydrolysis by HslU are essential for unfolding of protein substrates subsequently hydrolyzed by HslV. HslU recognizes the N-terminal part of its protein substrates and unfolds these before they are guided to HslV for hydrolysis. This Lactobacillus helveticus (strain DPC 4571) protein is ATP-dependent protease ATPase subunit HslU.